The primary structure comprises 123 residues: Large ribosomal subunit protein bL12 (123 aa).

It belongs to the bacterial ribosomal protein bL12 family. In terms of assembly, homodimer. Part of the ribosomal stalk of the 50S ribosomal subunit. Forms a multimeric L10(L12)X complex, where L10 forms an elongated spine to which 2 to 4 L12 dimers bind in a sequential fashion. Binds GTP-bound translation factors.

Its function is as follows. Forms part of the ribosomal stalk which helps the ribosome interact with GTP-bound translation factors. Is thus essential for accurate translation. This Dechloromonas aromatica (strain RCB) protein is Large ribosomal subunit protein bL12.